We begin with the raw amino-acid sequence, 305 residues long: Probable xyloglucan endotransglucosylase/hydrolase protein 21 (305 aa).

Positions 1 to 25 (MVSSTLLVMSISLFLGLSILLVVHG) are cleaved as a signal peptide. The region spanning 26–216 (KDFNQDIDIT…WSQGPFVASF (191 aa)) is the GH16 domain. Asn-46 carries N-linked (GlcNAc...) asparagine glycosylation. Glu-102 acts as the Nucleophile in catalysis. The active-site Proton donor is the Glu-106. A xyloglucan-binding site is contributed by Glu-106. The N-linked (GlcNAc...) asparagine glycan is linked to Asn-110. Residues 119 to 121 (HTN) and 129 to 131 (DRE) each bind xyloglucan. Asn-146 carries N-linked (GlcNAc...) asparagine glycosylation. Residues 195 to 196 (DW) and Gly-200 contribute to the xyloglucan site. Residues Asn-206 and Asn-231 are each glycosylated (N-linked (GlcNAc...) asparagine). 2 cysteine pairs are disulfide-bonded: Cys-225–Cys-239 and Cys-282–Cys-296. The span at 236-253 (TSPCSPGDSTSSSSSSTS) shows a compositional bias: low complexity. Residues 236-258 (TSPCSPGDSTSSSSSSTSEWFSQ) are disordered. Arg-287 provides a ligand contact to xyloglucan.

This sequence belongs to the glycosyl hydrolase 16 family. XTH group 2 subfamily. Contains at least one intrachain disulfide bond essential for its enzymatic activity. In terms of tissue distribution, predominantly expressed in green siliques.

It localises to the secreted. The protein resides in the cell wall. The protein localises to the extracellular space. Its subcellular location is the apoplast. It catalyses the reaction breaks a beta-(1-&gt;4) bond in the backbone of a xyloglucan and transfers the xyloglucanyl segment on to O-4 of the non-reducing terminal glucose residue of an acceptor, which can be a xyloglucan or an oligosaccharide of xyloglucan.. Its function is as follows. Catalyzes xyloglucan endohydrolysis (XEH) and/or endotransglycosylation (XET). Cleaves and religates xyloglucan polymers, an essential constituent of the primary cell wall, and thereby participates in cell wall construction of growing tissues. The sequence is that of Probable xyloglucan endotransglucosylase/hydrolase protein 21 (XTH21) from Arabidopsis thaliana (Mouse-ear cress).